The sequence spans 247 residues: MVDREQLVQKARLAEQAERYDDMAAAMKSVTELNEALSNEERNLLSVAYKNVVGARRSSWRVISSIEQKTSADGNEKKIEMVRAYREKIEKELETVCQDVLNLLDNFLIKNCGETQHESKVFYLKMKGDYYRYLAEVATGEKRAAVVESSEKSYSEAHEISKEHMQPTHPIRLGLALNYSVFYYEIQNAPEQACHLAKTAFDDAIAELDTLNEDSYKDSTLIMQLLRDNLTLWTSDQQDDEGGEGNN.

This sequence belongs to the 14-3-3 family. In terms of assembly, homodimer, and heterodimer with other family members.

The protein resides in the cytoplasm. Functionally, adapter protein implicated in the regulation of a large spectrum of both general and specialized signaling pathways. Binds to a large number of partners, usually by recognition of a phosphoserine or phosphothreonine motif. Binding generally results in the modulation of the activity of the binding partner. In Danio rerio (Zebrafish), this protein is 14-3-3 protein gamma-1 (ywhag1).